Here is a 243-residue protein sequence, read N- to C-terminus: Probable 2-phosphosulfolactate phosphatase (243 aa).

This sequence belongs to the ComB family. Mg(2+) is required as a cofactor.

The enzyme catalyses (2R)-O-phospho-3-sulfolactate + H2O = (2R)-3-sulfolactate + phosphate. This Synechococcus sp. (strain CC9605) protein is Probable 2-phosphosulfolactate phosphatase.